A 327-amino-acid chain; its full sequence is Aldo-keto reductase family 1 member A1 (327 aa).

NADP(+) is bound by residues 13-22, Thr23, Trp24, and Asp47; that span reads GQKIPLIGLG. The active-site Proton donor is the Tyr52. NADP(+) contacts are provided by Ser164, Asn165, Ser213, Leu215, Ser217, Lys265, Ser266, Val267, Thr268, Arg271, Gln274, and Asn275.

This sequence belongs to the aldo/keto reductase family.

It is found in the cytoplasm. The protein localises to the cytosol. Its subcellular location is the apical cell membrane. It catalyses the reaction a primary alcohol + NADP(+) = an aldehyde + NADPH + H(+). The catalysed reaction is S-nitroso-CoA + NADPH + H(+) = sulfinamide-CoA + NADP(+). The enzyme catalyses S-nitrosoglutathione + NADPH + H(+) = S-(hydroxysulfenamide)glutathione + NADP(+). Catalyzes the NADPH-dependent reduction of a wide variety of carbonyl-containing compounds to their corresponding alcohols. Displays enzymatic activity towards endogenous metabolites such as aromatic and aliphatic aldehydes, ketones, monosaccharides and bile acids. Acts as an aldehyde-detoxification enzyme. Also acts as an inhibitor of protein S-nitrosylation by mediating degradation of S-nitroso-coenzyme A (S-nitroso-CoA), a cofactor required to S-nitrosylate proteins. Also acts as a S-nitroso-glutathione reductase by catalyzing the NADPH-dependent reduction of S-nitrosoglutathione. Displays no reductase activity towards retinoids. This Xenopus tropicalis (Western clawed frog) protein is Aldo-keto reductase family 1 member A1 (akr1a1).